Here is a 1438-residue protein sequence, read N- to C-terminus: DNA-directed RNA polymerase subunit beta' (1438 aa).

Zn(2+)-binding residues include Cys-70, Cys-72, Cys-85, and Cys-88. Mg(2+) contacts are provided by Asp-461, Asp-463, and Asp-465. Zn(2+) is bound by residues Cys-821, Cys-895, Cys-902, and Cys-905. Low complexity predominate over residues 1413–1427; that stretch reads DAMAAAMGGDSAGGD. The tract at residues 1413 to 1438 is disordered; the sequence is DAMAAAMGGDSAGGDTKPEAPEASEE.

Belongs to the RNA polymerase beta' chain family. In terms of assembly, the RNAP catalytic core consists of 2 alpha, 1 beta, 1 beta' and 1 omega subunit. When a sigma factor is associated with the core the holoenzyme is formed, which can initiate transcription. Requires Mg(2+) as cofactor. It depends on Zn(2+) as a cofactor.

The catalysed reaction is RNA(n) + a ribonucleoside 5'-triphosphate = RNA(n+1) + diphosphate. Its function is as follows. DNA-dependent RNA polymerase catalyzes the transcription of DNA into RNA using the four ribonucleoside triphosphates as substrates. This chain is DNA-directed RNA polymerase subunit beta', found in Erythrobacter litoralis (strain HTCC2594).